Reading from the N-terminus, the 229-residue chain is Cytidylate kinase (229 aa).

12-20 contacts ATP; it reads GPSGSGKGT.

It belongs to the cytidylate kinase family. Type 1 subfamily.

It localises to the cytoplasm. The catalysed reaction is CMP + ATP = CDP + ADP. It catalyses the reaction dCMP + ATP = dCDP + ADP. The sequence is that of Cytidylate kinase from Azotobacter vinelandii (strain DJ / ATCC BAA-1303).